An 82-amino-acid chain; its full sequence is uncharacterized protein (82 aa).

A run of 2 helical transmembrane segments spans residues L29 to I49 and W55 to F75.

It localises to the cell membrane. This is an uncharacterized protein from Escherichia coli (strain K12).